A 562-amino-acid chain; its full sequence is Arginine--tRNA ligase (562 aa).

Residues 126–136 (ANPTGPLNVGH) carry the 'HIGH' region motif.

This sequence belongs to the class-I aminoacyl-tRNA synthetase family. As to quaternary structure, monomer.

The protein localises to the cytoplasm. It carries out the reaction tRNA(Arg) + L-arginine + ATP = L-arginyl-tRNA(Arg) + AMP + diphosphate. The polypeptide is Arginine--tRNA ligase (Salinibacter ruber (strain DSM 13855 / M31)).